The chain runs to 334 residues: O-methyltransferase SfmM3 (334 aa).

S-adenosyl-L-methionine-binding positions include D190 and 216–218; that span reads GDF. The active-site Proton acceptor is the H236.

It belongs to the class I-like SAM-binding methyltransferase superfamily. Cation-independent O-methyltransferase family. COMT subfamily.

It carries out the reaction 5-hydroxy-3-methyl-L-tyrosine + S-adenosyl-L-methionine = 5-hydroxy-3-methyl-O-methyl-L-tyrosine + S-adenosyl-L-homocysteine + H(+). It participates in antibiotic biosynthesis. Functionally, O-methyltransferase that mediates the methylation of 3-hydroxy-5-methyl-L-tyrosine (3-OH-5-Me-Tyr) into 3-hydroxy-5-methyl-O-methyltyrosine (3-OH-5-Me-OMe-Tyr), a core structure of saframycin A, a potent antitumor antibiotic that belongs to the tetrahydroisoquinoline family. The polypeptide is O-methyltransferase SfmM3 (Streptomyces lavendulae).